Here is a 187-residue protein sequence, read N- to C-terminus: Large ribosomal subunit protein uL5 (187 aa).

The protein belongs to the universal ribosomal protein uL5 family. In terms of assembly, part of the 50S ribosomal subunit; part of the 5S rRNA/L5/L18/L25 subcomplex. Contacts the 5S rRNA and the P site tRNA. Forms a bridge to the 30S subunit in the 70S ribosome.

In terms of biological role, this is one of the proteins that bind and probably mediate the attachment of the 5S RNA into the large ribosomal subunit, where it forms part of the central protuberance. In the 70S ribosome it contacts protein S13 of the 30S subunit (bridge B1b), connecting the 2 subunits; this bridge is implicated in subunit movement. Contacts the P site tRNA; the 5S rRNA and some of its associated proteins might help stabilize positioning of ribosome-bound tRNAs. This Mycobacterium bovis (strain BCG / Tokyo 172 / ATCC 35737 / TMC 1019) protein is Large ribosomal subunit protein uL5.